Here is a 218-residue protein sequence, read N- to C-terminus: MTTQKTVLITGFEPFGKETINPSWEAAKQLQGRELCGARVEARQLPCVFDVSLACLYAAIDDVQPDLVIAVGQAGGRPNITVERVAININDASIPDNQGNQPINTPIVATGPAAYFATLPINAIVKGLRDAGVPASISQTAGTFVCNHVMYGLLHHLACIYPEIRGGVLHIPYLPEQAARYSGTPSMALETVITALEIAIDEALKNSEDIANNGDTAH.

Catalysis depends on residues glutamate 83, cysteine 146, and histidine 170.

The protein belongs to the peptidase C15 family. As to quaternary structure, homotetramer.

The protein resides in the cytoplasm. It catalyses the reaction Release of an N-terminal pyroglutamyl group from a polypeptide, the second amino acid generally not being Pro.. Functionally, removes 5-oxoproline from various penultimate amino acid residues except L-proline. This Photorhabdus laumondii subsp. laumondii (strain DSM 15139 / CIP 105565 / TT01) (Photorhabdus luminescens subsp. laumondii) protein is Pyrrolidone-carboxylate peptidase 2.